Consider the following 112-residue polypeptide: DNA-binding protein TGAM_1196 (112 aa).

Belongs to the PDCD5 family.

This Thermococcus gammatolerans (strain DSM 15229 / JCM 11827 / EJ3) protein is DNA-binding protein TGAM_1196.